We begin with the raw amino-acid sequence, 113 residues long: uncharacterized protein (113 aa).

Residues 7 to 29 (FFILIVLLFTVFSLKEFIPNTFC) form a helical membrane-spanning segment.

Its subcellular location is the membrane. This is an uncharacterized protein from Aquifex aeolicus (strain VF5).